The sequence spans 302 residues: Ornithine carbamoyltransferase (302 aa).

Carbamoyl phosphate is bound by residues 52 to 55 (STRT), Gln-79, Arg-103, and 130 to 133 (HPCQ). L-ornithine contacts are provided by residues Asn-161, Asp-221, and 225 to 226 (SM). Carbamoyl phosphate-binding positions include 261-262 (CL) and Arg-289.

It belongs to the aspartate/ornithine carbamoyltransferase superfamily. OTCase family.

The protein resides in the cytoplasm. The enzyme catalyses carbamoyl phosphate + L-ornithine = L-citrulline + phosphate + H(+). It functions in the pathway amino-acid biosynthesis; L-arginine biosynthesis; L-arginine from L-ornithine and carbamoyl phosphate: step 1/3. Its function is as follows. Reversibly catalyzes the transfer of the carbamoyl group from carbamoyl phosphate (CP) to the N(epsilon) atom of ornithine (ORN) to produce L-citrulline. The polypeptide is Ornithine carbamoyltransferase (Syntrophotalea carbinolica (strain DSM 2380 / NBRC 103641 / GraBd1) (Pelobacter carbinolicus)).